The primary structure comprises 475 residues: Ankyrin repeat, SAM and basic leucine zipper domain-containing protein 1 (475 aa).

Phosphoserine occurs at positions 17, 18, and 20. ANK repeat units follow at residues 45 to 74, 78 to 107, 110 to 144, 148 to 177, 181 to 210, and 214 to 243; these read EKNE…SVDT, YGWT…NASF, DKQT…DPNM, RLMT…DVNA, NGYT…NKMI, and DGKT…PLEG. The SAM domain occupies 272–334; sequence SYTAFGDLEI…KILAALKELE (63 aa).

In terms of assembly, interacts with DDX4, PIWIL1, RANBP9 and TDRD1.

It localises to the cytoplasm. Plays a central role during spermatogenesis by repressing transposable elements and preventing their mobilization, which is essential for the germline integrity. Acts via the piRNA metabolic process, which mediates the repression of transposable elements during meiosis by forming complexes composed of piRNAs and Piwi proteins and governs the methylation and subsequent repression of transposons. Its association with pi-bodies suggests a participation in the primary piRNAs metabolic process. Required prior to the pachytene stage to facilitate the production of multiple types of piRNAs, including those associated with repeats involved in the regulation of retrotransposons. May act by mediating protein-protein interactions during germ cell maturation. The protein is Ankyrin repeat, SAM and basic leucine zipper domain-containing protein 1 (ASZ1) of Atelerix albiventris (Middle-African hedgehog).